Reading from the N-terminus, the 194-residue chain is uncharacterized protein (194 aa).

The signal sequence occupies residues 1-24; that stretch reads MRKFVAFFVIVALAALLAGCGGQG.

This is an uncharacterized protein from Archaeoglobus fulgidus (strain ATCC 49558 / DSM 4304 / JCM 9628 / NBRC 100126 / VC-16).